The primary structure comprises 767 residues: Phosphoribosylformylglycinamidine synthase subunit PurL (767 aa).

H65 is a catalytic residue. Positions 68 and 112 each coordinate ATP. E114 contributes to the Mg(2+) binding site. Residues 115–118 (SHNH) and R137 each bind substrate. The active-site Proton acceptor is the H116. Mg(2+) is bound at residue D138. Q262 contributes to the substrate binding site. Mg(2+) is bound at residue D290. 334 to 336 (ESQ) provides a ligand contact to substrate. ATP is bound by residues D522 and G559. N560 is a binding site for Mg(2+). S562 serves as a coordination point for substrate.

The protein belongs to the FGAMS family. Monomer. Part of the FGAM synthase complex composed of 1 PurL, 1 PurQ and 2 PurS subunits.

Its subcellular location is the cytoplasm. The catalysed reaction is N(2)-formyl-N(1)-(5-phospho-beta-D-ribosyl)glycinamide + L-glutamine + ATP + H2O = 2-formamido-N(1)-(5-O-phospho-beta-D-ribosyl)acetamidine + L-glutamate + ADP + phosphate + H(+). It participates in purine metabolism; IMP biosynthesis via de novo pathway; 5-amino-1-(5-phospho-D-ribosyl)imidazole from N(2)-formyl-N(1)-(5-phospho-D-ribosyl)glycinamide: step 1/2. Functionally, part of the phosphoribosylformylglycinamidine synthase complex involved in the purines biosynthetic pathway. Catalyzes the ATP-dependent conversion of formylglycinamide ribonucleotide (FGAR) and glutamine to yield formylglycinamidine ribonucleotide (FGAM) and glutamate. The FGAM synthase complex is composed of three subunits. PurQ produces an ammonia molecule by converting glutamine to glutamate. PurL transfers the ammonia molecule to FGAR to form FGAM in an ATP-dependent manner. PurS interacts with PurQ and PurL and is thought to assist in the transfer of the ammonia molecule from PurQ to PurL. The chain is Phosphoribosylformylglycinamidine synthase subunit PurL from Renibacterium salmoninarum (strain ATCC 33209 / DSM 20767 / JCM 11484 / NBRC 15589 / NCIMB 2235).